The primary structure comprises 250 residues: Ribonuclease HII (250 aa).

An RNase H type-2 domain is found at 66-250 (ELVAGVDEVG…TFAPVSDFFK (185 aa)). Asp-72, Glu-73, and Asp-164 together coordinate a divalent metal cation.

It belongs to the RNase HII family. Requires Mn(2+) as cofactor. The cofactor is Mg(2+).

The protein resides in the cytoplasm. The enzyme catalyses Endonucleolytic cleavage to 5'-phosphomonoester.. Functionally, endonuclease that specifically degrades the RNA of RNA-DNA hybrids. The chain is Ribonuclease HII from Lactobacillus helveticus (strain DPC 4571).